The primary structure comprises 278 residues: MGQKINPNGFRLGISTDHKSRWYADKLYKSYVGEDVAIRKLLSKGMERAGIAKVEIERTRDRVRVDIHTARPGIVIGRRGAEADRIRGELEKLTGKQVQLNILEVKNPEVDAQLVAQGVAEQLSGRVQFRRAMRKAMQTSMRSGAKGIRIQCSGRLNGAEMSRTEFYREGRVPLHTLRADIDYGFYEARTTFGRIGVKVWIYKGEVAGTRAERQAQAAARAGVPGRGGRPQRGGERPSRGSRGDRPTRADRGGDAPTSEATGAATEQAAPAPAENQEG.

Residues 38 to 106 (IRKLLSKGME…QVQLNILEVK (69 aa)) form the KH type-2 domain. A disordered region spans residues 213 to 278 (RQAQAAARAG…APAPAENQEG (66 aa)). Over residues 214 to 223 (QAQAAARAGV) the composition is skewed to low complexity. Over residues 232 to 253 (RGGERPSRGSRGDRPTRADRGG) the composition is skewed to basic and acidic residues. The span at 259–278 (EATGAATEQAAPAPAENQEG) shows a compositional bias: low complexity.

It belongs to the universal ribosomal protein uS3 family. Part of the 30S ribosomal subunit. Forms a tight complex with proteins S10 and S14.

Its function is as follows. Binds the lower part of the 30S subunit head. Binds mRNA in the 70S ribosome, positioning it for translation. The polypeptide is Small ribosomal subunit protein uS3 (Nocardioides sp. (strain ATCC BAA-499 / JS614)).